Reading from the N-terminus, the 238-residue chain is Ureidoacrylate amidohydrolase RutB (238 aa).

Catalysis depends on D35, which acts as the Proton acceptor. K144 is a catalytic residue. C177 (nucleophile) is an active-site residue.

The protein belongs to the isochorismatase family. RutB subfamily.

It catalyses the reaction (Z)-3-ureidoacrylate + H2O + H(+) = (Z)-3-aminoacrylate + NH4(+) + CO2. The catalysed reaction is (Z)-3-ureidoacrylate + H2O = (Z)-3-aminoacrylate + carbamate + H(+). It carries out the reaction (Z)-2-methylureidoacrylate + H2O + H(+) = (Z)-2-methylaminoacrylate + NH4(+) + CO2. In terms of biological role, hydrolyzes ureidoacrylate to form aminoacrylate and carbamate. The carbamate hydrolyzes spontaneously, thereby releasing one of the nitrogen atoms of the pyrimidine ring as ammonia and one of its carbon atoms as CO2. The polypeptide is Ureidoacrylate amidohydrolase RutB (Caulobacter vibrioides (strain NA1000 / CB15N) (Caulobacter crescentus)).